Reading from the N-terminus, the 300-residue chain is Ribosomal protein L11 methyltransferase (300 aa).

The S-adenosyl-L-methionine site is built by T144, G165, D187, and N235.

The protein belongs to the methyltransferase superfamily. PrmA family.

The protein localises to the cytoplasm. It carries out the reaction L-lysyl-[protein] + 3 S-adenosyl-L-methionine = N(6),N(6),N(6)-trimethyl-L-lysyl-[protein] + 3 S-adenosyl-L-homocysteine + 3 H(+). In terms of biological role, methylates ribosomal protein L11. The polypeptide is Ribosomal protein L11 methyltransferase (Prochlorococcus marinus (strain MIT 9515)).